We begin with the raw amino-acid sequence, 303 residues long: Protoheme IX farnesyltransferase (303 aa).

9 helical membrane-spanning segments follow: residues 26 to 46, 48 to 68, 98 to 118, 120 to 140, 148 to 168, 174 to 194, 221 to 241, 244 to 264, and 278 to 298; these read VVALMLLTSLIGMLLAVPGMV, IDILILGNLGIALCAGSAAAV, AILFAAILGLAGMAILMVWVN, LTAWLTLASLVGYAFIYTFWL, IVIGGLAGAAPPLLGWVAVTG, ALLLVLIIFAWTPPHFWALAV, ILLYTFILIAVTLLPYATHML, LYLLGAVVLGIGFLYYAVAMM, and YSIVYLMALFVVMLLDHYLLP.

Belongs to the UbiA prenyltransferase family. Protoheme IX farnesyltransferase subfamily.

The protein localises to the cell inner membrane. It carries out the reaction heme b + (2E,6E)-farnesyl diphosphate + H2O = Fe(II)-heme o + diphosphate. It participates in porphyrin-containing compound metabolism; heme O biosynthesis; heme O from protoheme: step 1/1. Functionally, converts heme B (protoheme IX) to heme O by substitution of the vinyl group on carbon 2 of heme B porphyrin ring with a hydroxyethyl farnesyl side group. This Saccharophagus degradans (strain 2-40 / ATCC 43961 / DSM 17024) protein is Protoheme IX farnesyltransferase.